Here is a 622-residue protein sequence, read N- to C-terminus: Probable methionine--tRNA ligase, mitochondrial (622 aa).

The 'HIGH' region signature appears at 67–79 (PIFYVNASPHVGH). The 'KMSKS' region motif lies at 366–370 (KMSKS). Lys369 is an ATP binding site. Positions 592 to 622 (LDDIKGMGPDAGSKKHSSGNKPSSGNKKPTA) are disordered. A compositionally biased stretch (low complexity) spans 610–622 (GNKPSSGNKKPTA).

It belongs to the class-I aminoacyl-tRNA synthetase family.

The protein localises to the mitochondrion matrix. The enzyme catalyses tRNA(Met) + L-methionine + ATP = L-methionyl-tRNA(Met) + AMP + diphosphate. The protein is Probable methionine--tRNA ligase, mitochondrial of Neurospora crassa (strain ATCC 24698 / 74-OR23-1A / CBS 708.71 / DSM 1257 / FGSC 987).